The sequence spans 299 residues: Foldase protein PrsA (299 aa).

The first 19 residues, 1 to 19 (MKKWTIAASLSIGVLALSA), serve as a signal peptide directing secretion. C20 carries N-palmitoyl cysteine lipidation. The S-diacylglycerol cysteine moiety is linked to residue C20. Residues 137-227 (NTEIQAQHIL…HGTHIIKVND (91 aa)) enclose the PpiC domain.

It belongs to the PrsA family.

It is found in the cell membrane. It carries out the reaction [protein]-peptidylproline (omega=180) = [protein]-peptidylproline (omega=0). Its function is as follows. Plays a major role in protein secretion by helping the post-translocational extracellular folding of several secreted proteins. The polypeptide is Foldase protein PrsA (Oceanobacillus iheyensis (strain DSM 14371 / CIP 107618 / JCM 11309 / KCTC 3954 / HTE831)).